Here is a 1032-residue protein sequence, read N- to C-terminus: Probable ATP-dependent RNA helicase DDX46 (1032 aa).

The segment covering 1–24 has biased composition (basic residues); sequence MGRESRHYRKRSASRGRSGSRSRS. Residues 1–227 form a disordered region; it reads MGRESRHYRK…TEMEDEELDP (227 aa). A lipid anchor (N-myristoyl glycine) is attached at G2. Over residues 26 to 49 the composition is skewed to basic and acidic residues; sequence SPSDKRSKRGDDRRSRSRDRDRRR. Basic residues-rich tracts occupy residues 50 to 73 and 81 to 103; these read ERSRSRDKRRSRSRDRKRLRRSRS and ERRRSRSRDRRRSRSRSRGRRSR. The span at 112-200 shows a compositional bias: basic and acidic residues; sequence KKTENRSRSK…EMKQGKKWSL (89 aa). Positions 152–197 form a coiled coil; that stretch reads DQNKLEEEMRKRKERVEKWREEQRKKAMENIGELKKEIEEMKQGKK. K186 participates in a covalent cross-link: Glycyl lysine isopeptide (Lys-Gly) (interchain with G-Cter in SUMO2). The residue at position 199 (S199) is a Phosphoserine. A compositionally biased stretch (acidic residues) spans 201–211; that stretch reads EDDDDDEDDPA. N6-acetyllysine is present on K263. A Phosphotyrosine modification is found at Y294. Residues S295 and S296 each carry the phosphoserine modification. K325 is covalently cross-linked (Glycyl lysine isopeptide (Lys-Gly) (interchain with G-Cter in SUMO2)). S346 bears the Phosphoserine mark. The Q motif signature appears at 372 to 400; the sequence is KSWVQCGISMKILNSLKKHGYEKPTPIQT. The Helicase ATP-binding domain maps to 403–581; it reads IPAIMSGRDL…RRILSKPIEV (179 aa). 416-423 is a binding site for ATP; that stretch reads AKTGSGKT. The DEAD box motif lies at 529–532; it reads DEAD. The Helicase C-terminal domain maps to 592–753; that stretch reads DVEQQVIVIE…AVPPDLEKLW (162 aa). The residue at position 776 (K776) is an N6-acetyllysine. K779 participates in a covalent cross-link: Glycyl lysine isopeptide (Lys-Gly) (interchain with G-Cter in SUMO2). The residue at position 804 (S804) is a Phosphoserine. N6-acetyllysine is present on K904. Residues K908 and K916 each participate in a glycyl lysine isopeptide (Lys-Gly) (interchain with G-Cter in SUMO2) cross-link. S929 is subject to Phosphoserine.

Belongs to the DEAD box helicase family. DDX46/PRP5 subfamily. As to quaternary structure, component of the 17S U2 SnRNP complex, a ribonucleoprotein complex that contains small nuclear RNA (snRNA) U2 and a number of specific proteins. Within the 17S U2 SnRNP complex, DDX46 is part of the SF3B subcomplex, which is required for 'A' complex assembly formed by the stable binding of U2 snRNP to the branchpoint sequence in pre-mRNA. Recruited to the 17S U2 SnRNP complex following release of DDX42; DDX42 and DDX46 bind the SF3B subcomplex in a competitive manner.

Its subcellular location is the nucleus speckle. It is found in the nucleus. It localises to the cajal body. It catalyses the reaction ATP + H2O = ADP + phosphate + H(+). Functionally, component of the 17S U2 SnRNP complex of the spliceosome, a large ribonucleoprotein complex that removes introns from transcribed pre-mRNAs. The 17S U2 SnRNP complex (1) directly participates in early spliceosome assembly and (2) mediates recognition of the intron branch site during pre-mRNA splicing by promoting the selection of the pre-mRNA branch-site adenosine, the nucleophile for the first step of splicing. Within the 17S U2 SnRNP complex, DDX46 plays essential roles during assembly of pre-spliceosome and proofreading of the branch site. This chain is Probable ATP-dependent RNA helicase DDX46 (Ddx46), found in Mus musculus (Mouse).